A 425-amino-acid polypeptide reads, in one-letter code: Peroxisomal membrane protein PEX14 (425 aa).

Disordered regions lie at residues Arg-49–Ala-89 and Asp-247–Ser-425. The span at Ser-56–Ala-76 shows a compositional bias: low complexity. An SH3-binding motif is present at residues Ala-89 to Trp-97. The span at Pro-256–Ser-297 shows a compositional bias: polar residues. Composition is skewed to basic and acidic residues over residues Asp-315–Thr-324 and Leu-333–Asp-366.

The protein belongs to the peroxin-14 family. As to quaternary structure, interacts with PEX13 (via SH3 domain); forming the PEX13-PEX14 docking complex. Interacts with PEX5 (via WxxxF/Y motifs). Interacts with PEX20 (via WxxxF/Y motifs). Interacts with PEX3, PEX7, PEX8 and PEX17. Phosphorylated on serine or threonine residues.

It localises to the peroxisome membrane. In terms of biological role, component of the PEX13-PEX14 docking complex, a translocon channel that specifically mediates the import of peroxisomal cargo proteins bound to PEX5 or PEX20 receptors. The PEX13-PEX14 docking complex forms a large import pore which can be opened to a diameter of about 9 nm. Mechanistically, PEX5 (or PEX20) receptor along with cargo proteins associates with the PEX14 subunit of the PEX13-PEX14 docking complex in the cytosol, leading to the insertion of the receptor into the organelle membrane with the concomitant translocation of the cargo into the peroxisome matrix. This Komagataella pastoris (Yeast) protein is Peroxisomal membrane protein PEX14.